We begin with the raw amino-acid sequence, 49 residues long: DNA-directed RNA polymerase subunit Rpo12 (49 aa).

Cys11, Cys27, and Cys30 together coordinate Zn(2+).

This sequence belongs to the archaeal Rpo12/eukaryotic RPC10 RNA polymerase subunit family. Part of the RNA polymerase complex. Zn(2+) is required as a cofactor.

The protein localises to the cytoplasm. The enzyme catalyses RNA(n) + a ribonucleoside 5'-triphosphate = RNA(n+1) + diphosphate. Functionally, DNA-dependent RNA polymerase (RNAP) catalyzes the transcription of DNA into RNA using the four ribonucleoside triphosphates as substrates. In Pyrococcus horikoshii (strain ATCC 700860 / DSM 12428 / JCM 9974 / NBRC 100139 / OT-3), this protein is DNA-directed RNA polymerase subunit Rpo12.